The sequence spans 254 residues: NAD-dependent protein deacylase (254 aa).

The Deacetylase sirtuin-type domain maps to 1-250 (MERLEEARKR…LPPSPEDQAE (250 aa)). An NAD(+)-binding site is contributed by 22-41 (GAGISKPSGIPTFRDAEGLW). Substrate contacts are provided by tyrosine 66 and arginine 69. Residue 104–107 (QNVD) participates in NAD(+) binding. Catalysis depends on histidine 122, which acts as the Proton acceptor. The Zn(2+) site is built by cysteine 130, cysteine 133, cysteine 149, and cysteine 152. Residues 189–191 (GTS), 215–217 (NPE), and alanine 233 contribute to the NAD(+) site.

The protein belongs to the sirtuin family. Class III subfamily. Zn(2+) serves as cofactor.

The protein resides in the cytoplasm. It carries out the reaction N(6)-acetyl-L-lysyl-[protein] + NAD(+) + H2O = 2''-O-acetyl-ADP-D-ribose + nicotinamide + L-lysyl-[protein]. The enzyme catalyses N(6)-succinyl-L-lysyl-[protein] + NAD(+) + H2O = 2''-O-succinyl-ADP-D-ribose + nicotinamide + L-lysyl-[protein]. NAD-dependent lysine deacetylase and desuccinylase that specifically removes acetyl and succinyl groups on target proteins. Modulates the activities of several proteins which are inactive in their acylated form. The chain is NAD-dependent protein deacylase from Thermus thermophilus (strain ATCC BAA-163 / DSM 7039 / HB27).